Consider the following 71-residue polypeptide: Gas vesicle protein A (71 aa).

Residues 12–22 are alpha helix 1; it reads LAEVIDRILDK. The beta-strand 1 stretch occupies residues 26–34; it reads IDAWARVSL. Positions 35–37 are beta turn; it reads VGI. Residues 38-46 form a beta-strand 2 region; that stretch reads ELLAIEARV. The segment at 51-70 is alpha helix 2; sequence VETYLKYAEAVGLTQXAXXA.

This sequence belongs to the gas vesicle GvpA family. As to quaternary structure, the gas vesicle shell is 2 nm thick and consists of a single layer of this protein. It forms helical ribs nearly perpendicular to the long axis of the vesicle.

It localises to the gas vesicle shell. Gas vesicles are hollow, gas filled proteinaceous nanostructures found in some microorganisms. During planktonic growth they allow positioning of the organism at a favorable depth for light or nutrient acquisition. GvpA forms the protein shell. This Microcystis sp. (strain BC 84/1) protein is Gas vesicle protein A.